A 141-amino-acid chain; its full sequence is Large ribosomal subunit protein uL11 (141 aa).

Belongs to the universal ribosomal protein uL11 family. Part of the ribosomal stalk of the 50S ribosomal subunit. Interacts with L10 and the large rRNA to form the base of the stalk. L10 forms an elongated spine to which L12 dimers bind in a sequential fashion forming a multimeric L10(L12)X complex. In terms of processing, one or more lysine residues are methylated.

In terms of biological role, forms part of the ribosomal stalk which helps the ribosome interact with GTP-bound translation factors. The protein is Large ribosomal subunit protein uL11 of Streptococcus agalactiae serotype III (strain NEM316).